A 257-amino-acid polypeptide reads, in one-letter code: MSLLSKTRELNTLLQKHKGIAVDFKDVAQTISSVTVTNVFIVSRRGKILGSSLNELLKSQRIIQMLEERHIPSEYTERLMEVKQTESNIDIDNVLTVFPPENRELFIDSRTTIFPILGGGERLGTLVLGRVHDDFNENDLVLGEYAATVIGMEILREKHSEVEKEARDKAAITMAINSLSYSEKEAIEHIFEELGGTEGLLIASKVADRVGITRSVIVNALRKLESAGVIESRSLGMKGTFIKVKKEKFLDELEKSK.

Residues 1–155 are GAF domain; it reads MSLLSKTREL…AATVIGMEIL (155 aa). GTP contacts are provided by Val-22, Phe-24, Ser-43, Arg-44, Arg-45, and Lys-47. L-isoleucine-binding residues include Arg-61, Thr-96, and Phe-98. Positions 153 and 158 each coordinate GTP. The segment at residues 203 to 222 is a DNA-binding region (H-T-H motif); that stretch reads ASKVADRVGITRSVIVNALR.

The protein belongs to the CodY family. In terms of assembly, homodimer. Homotetramer. May form homodimers under conditions in which energy sources are sufficient (active state) and homotetramers under insufficient nutrient conditions (inactive state).

The protein resides in the cytoplasm. With respect to regulation, activity of CodY is modulated by interaction with two types of effectors: the branched-chain amino acids (BCAAs) leucine, isoleucine and valine, which are signals of the nutritional status of the cell, and GTP, which may signal the energetic status of the cell. Functionally, DNA-binding global transcriptional regulator which is involved in the adaptive response to starvation and acts by directly or indirectly controlling the expression of numerous genes in response to nutrient availability. During rapid exponential growth, CodY is highly active and represses genes whose products allow adaptation to nutrient depletion. The protein is Global transcriptional regulator CodY of Staphylococcus aureus (strain Mu3 / ATCC 700698).